Consider the following 360-residue polypeptide: Peptide chain release factor 1 (360 aa).

Gln-236 is subject to N5-methylglutamine. The segment at 288–308 is disordered; it reads QDEQDAERKSTIGTGDRSERI. A compositionally biased stretch (basic and acidic residues) spans 293–308; sequence AERKSTIGTGDRSERI.

The protein belongs to the prokaryotic/mitochondrial release factor family. Methylated by PrmC. Methylation increases the termination efficiency of RF1.

It is found in the cytoplasm. Its function is as follows. Peptide chain release factor 1 directs the termination of translation in response to the peptide chain termination codons UAG and UAA. The sequence is that of Peptide chain release factor 1 from Streptococcus equi subsp. equi (strain 4047).